We begin with the raw amino-acid sequence, 76 residues long: KANTR integral membrane protein (76 aa).

The first 25 residues, 1–25, serve as a signal peptide directing secretion; that stretch reads MSPFSLLILVICAFSLFFLINLSRG. Topologically, residues 26–34 are extracellular; sequence LSILLVFTK. A helical membrane pass occupies residues 35 to 55; that stretch reads NQLLALLLLSIVSLFSISLIS. Over 56-76 the chain is Cytoplasmic; the sequence is ALIFFDLLPSTFFGFILLLFF.

It is found in the membrane. The chain is KANTR integral membrane protein from Mus musculus (Mouse).